A 120-amino-acid chain; its full sequence is Cytochrome c2 iso-1 (120 aa).

A Pyrrolidone carboxylic acid modification is found at Gln1. 4 residues coordinate heme c: Cys15, Cys18, His19, and Met98.

The protein belongs to the cytochrome c family. Post-translationally, binds 1 heme c group covalently per subunit.

Its function is as follows. Cytochrome c2 is found mainly in purple, non-sulfur, photosynthetic bacteria where it functions as the electron donor to the oxidized bacteriochlorophyll in the photophosphorylation pathway. However, it may also have a role in the respiratory chain and is found in some non-photosynthetic bacteria. The protein is Cytochrome c2 iso-1 of Rhodospirillum centenum (Rhodocista centenaria).